The primary structure comprises 480 residues: Ribosomal protein uS12 methylthiotransferase RimO (480 aa).

The MTTase N-terminal domain maps to Asn-37–Pro-147. [4Fe-4S] cluster-binding residues include Cys-46, Cys-82, Cys-111, Cys-179, Cys-183, and Cys-186. One can recognise a Radical SAM core domain in the interval Leu-165–Glu-402. The TRAM domain maps to Ala-405 to Asp-471.

Belongs to the methylthiotransferase family. RimO subfamily. Requires [4Fe-4S] cluster as cofactor.

The protein resides in the cytoplasm. It catalyses the reaction L-aspartate(89)-[ribosomal protein uS12]-hydrogen + (sulfur carrier)-SH + AH2 + 2 S-adenosyl-L-methionine = 3-methylsulfanyl-L-aspartate(89)-[ribosomal protein uS12]-hydrogen + (sulfur carrier)-H + 5'-deoxyadenosine + L-methionine + A + S-adenosyl-L-homocysteine + 2 H(+). Functionally, catalyzes the methylthiolation of an aspartic acid residue of ribosomal protein uS12. The chain is Ribosomal protein uS12 methylthiotransferase RimO from Shewanella sp. (strain ANA-3).